Consider the following 393-residue polypeptide: tRNA(Met) cytidine acetate ligase (393 aa).

3 residues coordinate ATP: G81, N142, and R167.

It belongs to the TmcAL family.

The protein localises to the cytoplasm. The catalysed reaction is cytidine(34) in elongator tRNA(Met) + acetate + ATP = N(4)-acetylcytidine(34) in elongator tRNA(Met) + AMP + diphosphate. Its function is as follows. Catalyzes the formation of N(4)-acetylcytidine (ac(4)C) at the wobble position of elongator tRNA(Met), using acetate and ATP as substrates. First activates an acetate ion to form acetyladenylate (Ac-AMP) and then transfers the acetyl group to tRNA to form ac(4)C34. The chain is tRNA(Met) cytidine acetate ligase from Bacillus anthracis (strain A0248).